The sequence spans 213 residues: Nucleoside triphosphate pyrophosphatase (213 aa).

The Proton acceptor role is filled by Asp-79.

Belongs to the Maf family. A divalent metal cation serves as cofactor.

It localises to the cytoplasm. The catalysed reaction is a ribonucleoside 5'-triphosphate + H2O = a ribonucleoside 5'-phosphate + diphosphate + H(+). The enzyme catalyses a 2'-deoxyribonucleoside 5'-triphosphate + H2O = a 2'-deoxyribonucleoside 5'-phosphate + diphosphate + H(+). Its function is as follows. Nucleoside triphosphate pyrophosphatase. May have a dual role in cell division arrest and in preventing the incorporation of modified nucleotides into cellular nucleic acids. This Rhodococcus erythropolis (strain PR4 / NBRC 100887) protein is Nucleoside triphosphate pyrophosphatase.